A 413-amino-acid chain; its full sequence is Precorrin-6Y C(5,15)-methyltransferase [decarboxylating] (413 aa).

It belongs to the precorrin methyltransferase family.

It catalyses the reaction precorrin-6B + 2 S-adenosyl-L-methionine = precorrin-8X + 2 S-adenosyl-L-homocysteine + CO2 + 3 H(+). It functions in the pathway cofactor biosynthesis; adenosylcobalamin biosynthesis; cob(II)yrinate a,c-diamide from precorrin-2 (aerobic route): step 7/10. In terms of biological role, catalyzes the methylation of both C-5 and C-15 in precorrin-6Y to form precorrin-8X. The polypeptide is Precorrin-6Y C(5,15)-methyltransferase [decarboxylating] (cobL) (Sinorhizobium sp).